The following is a 345-amino-acid chain: Beta-hexosaminidase (345 aa).

Residues Asp-60, Arg-68, Arg-132, and 162–163 (KH) each bind substrate. His-175 serves as the catalytic Proton donor/acceptor. Residue Asp-247 is the Nucleophile of the active site.

This sequence belongs to the glycosyl hydrolase 3 family. NagZ subfamily.

It is found in the cytoplasm. It carries out the reaction Hydrolysis of terminal non-reducing N-acetyl-D-hexosamine residues in N-acetyl-beta-D-hexosaminides.. The protein operates within cell wall biogenesis; peptidoglycan recycling. Functionally, plays a role in peptidoglycan recycling by cleaving the terminal beta-1,4-linked N-acetylglucosamine (GlcNAc) from peptide-linked peptidoglycan fragments, giving rise to free GlcNAc, anhydro-N-acetylmuramic acid and anhydro-N-acetylmuramic acid-linked peptides. The chain is Beta-hexosaminidase from Actinobacillus pleuropneumoniae serotype 5b (strain L20).